Reading from the N-terminus, the 78-residue chain is Apolipoprotein C-I (78 aa).

Residues 1-26 (MRLILWLPVLVVVLLMVLEGPAPAQG) form the signal peptide.

It belongs to the apolipoprotein C1 family.

It is found in the secreted. Inhibitor of lipoprotein binding to the low density lipoprotein (LDL) receptor, LDL receptor-related protein, and very low density lipoprotein (VLDL) receptor. Associates with high density lipoproteins (HDL) and the triacylglycerol-rich lipoproteins in the plasma and makes up about 10% of the protein of the VLDL and 2% of that of HDL. Appears to interfere directly with fatty acid uptake and is also the major plasma inhibitor of cholesteryl ester transfer protein (CETP). Binds free fatty acids and reduces their intracellular esterification. Modulates the interaction of APOE with beta-migrating VLDL and inhibits binding of beta-VLDL to the LDL receptor-related protein. In Lynx pardinus (Iberian lynx), this protein is Apolipoprotein C-I (APOC1).